We begin with the raw amino-acid sequence, 243 residues long: Aliphatic sulfonates import ATP-binding protein SsuB (243 aa).

An ABC transporter domain is found at 11 to 230 (ATVRGLRKSY…RTHPSFASYT (220 aa)). 43–50 (GRSGSGKS) serves as a coordination point for ATP.

The protein belongs to the ABC transporter superfamily. Aliphatic sulfonates importer (TC 3.A.1.17.2) family. The complex is composed of two ATP-binding proteins (SsuB), two transmembrane proteins (SsuC) and a solute-binding protein (SsuA).

Its subcellular location is the cell membrane. The catalysed reaction is ATP + H2O + aliphatic sulfonate-[sulfonate-binding protein]Side 1 = ADP + phosphate + aliphatic sulfonateSide 2 + [sulfonate-binding protein]Side 1.. Functionally, part of the ABC transporter complex SsuABC involved in aliphatic sulfonates import. Responsible for energy coupling to the transport system. Is also involved in taurine transport. Seems to not be involved in long chain aliphatic sulfonates transport (chain length of eight carbon atoms or more). The sequence is that of Aliphatic sulfonates import ATP-binding protein SsuB from Corynebacterium glutamicum (strain ATCC 13032 / DSM 20300 / JCM 1318 / BCRC 11384 / CCUG 27702 / LMG 3730 / NBRC 12168 / NCIMB 10025 / NRRL B-2784 / 534).